The primary structure comprises 292 residues: tRNA (guanine-N(7)-)-methyltransferase (292 aa).

A disordered region spans residues 1–54; the sequence is MLKRDQSEMDIEAETANMGKEEKESFVHKRQKYRQEQEEKRLAAKKGVSFEQPE. Basic and acidic residues predominate over residues 19-42; it reads GKEEKESFVHKRQKYRQEQEEKRL. Residues Gly-110, 133-134, 168-169, and Cys-188 contribute to the S-adenosyl-L-methionine site; these read EI and NA. Asp-191 is a catalytic residue. 266-268 contacts S-adenosyl-L-methionine; the sequence is TEE.

It belongs to the class I-like SAM-binding methyltransferase superfamily. TrmB family. Forms a complex with TRM82.

Its subcellular location is the nucleus. It catalyses the reaction guanosine(46) in tRNA + S-adenosyl-L-methionine = N(7)-methylguanosine(46) in tRNA + S-adenosyl-L-homocysteine. The protein operates within tRNA modification; N(7)-methylguanine-tRNA biosynthesis. Functionally, catalyzes the formation of N(7)-methylguanine at position 46 (m7G46) in tRNA. The sequence is that of tRNA (guanine-N(7)-)-methyltransferase from Yarrowia lipolytica (strain CLIB 122 / E 150) (Yeast).